A 298-amino-acid chain; its full sequence is uncharacterized protein (298 aa).

It belongs to the glycosyltransferase 2 family.

This is an uncharacterized protein from Mycoplasma genitalium (strain ATCC 33530 / DSM 19775 / NCTC 10195 / G37) (Mycoplasmoides genitalium).